Here is a 496-residue protein sequence, read N- to C-terminus: uncharacterized protein (496 aa).

The N-terminal stretch at 1–19 (MTTGYILIAAILILGGVIA) is a signal peptide. The helical transmembrane segment at 45–67 (AVLVTILTGGLVSATTLAILFIA) threads the bilayer. Residues 113–137 (LETTRTDKKQVETQRDQAKKEKLKA) form a disordered region.

The protein localises to the membrane. This is an uncharacterized protein from Nostoc sp. (strain PCC 7120 / SAG 25.82 / UTEX 2576).